The sequence spans 187 residues: Translation initiation factor IF-3 (187 aa).

Belongs to the IF-3 family. Monomer.

The protein localises to the cytoplasm. Its function is as follows. IF-3 binds to the 30S ribosomal subunit and shifts the equilibrium between 70S ribosomes and their 50S and 30S subunits in favor of the free subunits, thus enhancing the availability of 30S subunits on which protein synthesis initiation begins. The sequence is that of Translation initiation factor IF-3 from Leptospira biflexa serovar Patoc (strain Patoc 1 / Ames).